We begin with the raw amino-acid sequence, 755 residues long: MAEQWDLDEECLRRLGALTLEQPELVESLSLQGSYAGKIHSIGDAFRNFKSLRSLDLSRNLITSLKGIQYLCSLQELNLYYNNIPSLVEVSRLQPLPFLKELDLRLNPVVRKDTDYRLFAVYTLQTLEKLDDRAVRDSERRAAKLHFSQLGNSENFLLEVEKSSREKTMKNCVTDEGPASHVSPEVDARMETDANKGLFIPFPNREIKDSLTSICAAQGSGTPAQKLDVFPLGTQMQEATRRETSDLHQEDELRLYPPPQSTVRSPEKMTRDGYRVSFLDTKSSGSSPEKDLIPKPDAYPCTHDASLGKRLDVGDSNQILPCQLPSEVCLDHYGNQYSQTLCLHGSLVKRAQKGKNYREHSIKPSQDKKATTSHPCGDLLTSLSNPDSSTGRLLRLSSDLYATTHFNSDPALLANVEQQLSSLRDFTPAPGSFPSSPALGNSLRTLLLPPGTPENREIPTKRSLSPSRRGFKRKDGILANPSLKRGFQDATGSEAQPLSSDLGSLHGLSGNHSPPISARTPHVATVLRQLLELVDKHWNGSGSLLLDKKFLGPARDLLLSLVVPAPSQQWRRSKLDDKAGKALCWRETELKEAGLLVPNDVESLKQKLVKVLEENLVLSEKIQQLEGTAATSIVSGHPSHTHDELLRKNQQLTIQVACLTQELTQLKRLEETVALLHESQRSLVVTNEYLLQQLHKEQKGYSGKSLLPPEKSHPLGRSSPFGKSTLSSSSPMVHDTGQYLIQSVSEADPEPSLWS.

2 LRR repeats span residues 51–72 (SLRSLDLSRNLITSLKGIQYLC) and 73–94 (SLQELNLYYNNIPSLVEVSRLQ). The 40-residue stretch at 107–146 (NPVVRKDTDYRLFAVYTLQTLEKLDDRAVRDSERRAAKLH) folds into the LRRCT domain. Disordered regions lie at residues 354–374 (GKNYREHSIKPSQDKKATTSH) and 448–517 (LPPG…PPIS). Residues 356-370 (NYREHSIKPSQDKKA) are compositionally biased toward basic and acidic residues. Over residues 498-510 (LSSDLGSLHGLSG) the composition is skewed to low complexity. Residues 601-671 (VESLKQKLVK…ELTQLKRLEE (71 aa)) are a coiled coil. The disordered stretch occupies residues 701-755 (YSGKSLLPPEKSHPLGRSSPFGKSTLSSSSPMVHDTGQYLIQSVSEADPEPSLWS). Polar residues predominate over residues 721–731 (FGKSTLSSSSP).

This is Leucine-rich repeat-containing protein 36 (Lrrc36) from Mus musculus (Mouse).